Reading from the N-terminus, the 195-residue chain is Ras-related protein rac-2 (195 aa).

10-17 serves as a coordination point for GTP; it reads GDGAVGKT. The short motif at 32-40 is the Effector region element; it reads YILTVFDTY. GTP-binding positions include 57-61 and 115-118; these read DTAGQ and TKAD. Positions 176 to 195 are disordered; it reads GLTPPQTPQTRAKKSNCTVL. At Cys192 the chain carries Cysteine methyl ester. A lipid anchor (S-geranylgeranyl cysteine) is attached at Cys192. Positions 193–195 are cleaved as a propeptide — removed in mature form; the sequence is TVL.

This sequence belongs to the small GTPase superfamily. Rho family.

It is found in the cell membrane. Its function is as follows. During gonad morphogenesis, plays a role in distal tip cell (DTC)-mediated guidance of gonad elongation. The polypeptide is Ras-related protein rac-2 (rac-2) (Caenorhabditis elegans).